The sequence spans 218 residues: Thiamine-phosphate synthase (218 aa).

4-amino-2-methyl-5-(diphosphooxymethyl)pyrimidine is bound by residues 36–40 (QVRSK) and aspartate 70. 2 residues coordinate Mg(2+): aspartate 71 and aspartate 94. Threonine 113 serves as a coordination point for 4-amino-2-methyl-5-(diphosphooxymethyl)pyrimidine. Position 141–143 (141–143 (TPT)) interacts with 2-[(2R,5Z)-2-carboxy-4-methylthiazol-5(2H)-ylidene]ethyl phosphate. Lysine 144 provides a ligand contact to 4-amino-2-methyl-5-(diphosphooxymethyl)pyrimidine.

The protein belongs to the thiamine-phosphate synthase family. The cofactor is Mg(2+).

It catalyses the reaction 2-[(2R,5Z)-2-carboxy-4-methylthiazol-5(2H)-ylidene]ethyl phosphate + 4-amino-2-methyl-5-(diphosphooxymethyl)pyrimidine + 2 H(+) = thiamine phosphate + CO2 + diphosphate. The catalysed reaction is 2-(2-carboxy-4-methylthiazol-5-yl)ethyl phosphate + 4-amino-2-methyl-5-(diphosphooxymethyl)pyrimidine + 2 H(+) = thiamine phosphate + CO2 + diphosphate. The enzyme catalyses 4-methyl-5-(2-phosphooxyethyl)-thiazole + 4-amino-2-methyl-5-(diphosphooxymethyl)pyrimidine + H(+) = thiamine phosphate + diphosphate. The protein operates within cofactor biosynthesis; thiamine diphosphate biosynthesis; thiamine phosphate from 4-amino-2-methyl-5-diphosphomethylpyrimidine and 4-methyl-5-(2-phosphoethyl)-thiazole: step 1/1. In terms of biological role, condenses 4-methyl-5-(beta-hydroxyethyl)thiazole monophosphate (THZ-P) and 2-methyl-4-amino-5-hydroxymethyl pyrimidine pyrophosphate (HMP-PP) to form thiamine monophosphate (TMP). In Corynebacterium jeikeium (strain K411), this protein is Thiamine-phosphate synthase.